The following is a 278-amino-acid chain: Orotidine 5'-phosphate decarboxylase (278 aa).

Substrate is bound by residues aspartate 40, lysine 62–histidine 64, aspartate 93–threonine 102, tyrosine 228, and arginine 246. The active-site Proton donor is the lysine 95.

It belongs to the OMP decarboxylase family.

It carries out the reaction orotidine 5'-phosphate + H(+) = UMP + CO2. It functions in the pathway pyrimidine metabolism; UMP biosynthesis via de novo pathway; UMP from orotate: step 2/2. The protein is Orotidine 5'-phosphate decarboxylase (PYR1) of Passalora fulva (Tomato leaf mold).